We begin with the raw amino-acid sequence, 288 residues long: Acetyl-coenzyme A carboxylase carboxyl transferase subunit beta (288 aa).

In terms of domain architecture, CoA carboxyltransferase N-terminal spans 30–288; sequence IMTKCPKCKK…KLHQEVKKDA (259 aa). The Zn(2+) site is built by C34, C37, C53, and C56. The C4-type zinc-finger motif lies at 34-56; sequence CPKCKKIMYTKELNENLNVCFNC.

It belongs to the AccD/PCCB family. Acetyl-CoA carboxylase is a heterohexamer composed of biotin carboxyl carrier protein (AccB), biotin carboxylase (AccC) and two subunits each of ACCase subunit alpha (AccA) and ACCase subunit beta (AccD). The cofactor is Zn(2+).

Its subcellular location is the cytoplasm. The catalysed reaction is N(6)-carboxybiotinyl-L-lysyl-[protein] + acetyl-CoA = N(6)-biotinyl-L-lysyl-[protein] + malonyl-CoA. The protein operates within lipid metabolism; malonyl-CoA biosynthesis; malonyl-CoA from acetyl-CoA: step 1/1. Its function is as follows. Component of the acetyl coenzyme A carboxylase (ACC) complex. Biotin carboxylase (BC) catalyzes the carboxylation of biotin on its carrier protein (BCCP) and then the CO(2) group is transferred by the transcarboxylase to acetyl-CoA to form malonyl-CoA. In Staphylococcus haemolyticus (strain JCSC1435), this protein is Acetyl-coenzyme A carboxylase carboxyl transferase subunit beta.